The primary structure comprises 70 residues: Large ribosomal subunit protein bL32 (70 aa).

The span at 1–19 (MAVPKRKTTPSRRGMRRSH) shows a compositional bias: basic residues. A disordered region spans residues 1–21 (MAVPKRKTTPSRRGMRRSHQA).

The protein belongs to the bacterial ribosomal protein bL32 family.

This Gluconobacter oxydans (strain 621H) (Gluconobacter suboxydans) protein is Large ribosomal subunit protein bL32.